Here is a 215-residue protein sequence, read N- to C-terminus: uncharacterized protein (215 aa).

This is an uncharacterized protein from Saccharomyces cerevisiae (strain ATCC 204508 / S288c) (Baker's yeast).